Reading from the N-terminus, the 480-residue chain is Carboxy-terminal processing protease CtpB (480 aa).

The signal sequence occupies residues 1–23; that stretch reads MNQKIMAVIAAGSMLFGGAGVYA. Residues 92-182 form the PDZ domain; the sequence is SVYMDKQTAK…SSVSMKIQRP (91 aa). The peptide binding stretch occupies residues 113 to 116; that stretch reads GIGA. The Nucleophile role is filled by serine 309. Active-site charge relay system residues include lysine 334 and glutamine 338.

Belongs to the peptidase S41A family. As to quaternary structure, homodimer. In terms of processing, is cleaved by SpoIVB in vitro and in vivo but this cleavage does not appear to be necessary for CtpB activation. CtpB can also cleave itself in vivo.

The protein localises to the forespore intermembrane space. It catalyses the reaction The enzyme shows specific recognition of a C-terminal tripeptide, Xaa-Yaa-Zaa, in which Xaa is preferably Ala or Leu, Yaa is preferably Ala or Tyr, and Zaa is preferably Ala, but then cleaves at a variable distance from the C-terminus. A typical cleavage is -Ala-Ala-|-Arg-Ala-Ala-Lys-Glu-Asn-Tyr-Ala-Leu-Ala-Ala.. Its activity is regulated as follows. Activated by peptide binding to the PDZ domain. In terms of biological role, involved in the signal transduction pathway leading to the proteolytic activation of the mother cell transcription factor pro-sigma-K during sporulation. The signaling serine protease CtpB triggers pro-sigma-K processing by cleaving the pre-processed regulatory protein SpoIVFA and is necessary for the proper timing of sigma-K activation. This Bacillus subtilis (strain 168) protein is Carboxy-terminal processing protease CtpB (ctpB).